Here is a 389-residue protein sequence, read N- to C-terminus: Brix domain-containing protein C1B9.03c (389 aa).

Residues 28–309 (SMVIRSGASE…LIKITEDAMG (282 aa)) enclose the Brix domain. A compositionally biased stretch (basic and acidic residues) spans 323-350 (EEIKQQDNFHEQSRALKEKRKKEQDENV). The segment at 323-389 (EEIKQQDNFH…EGSSAYSDTE (67 aa)) is disordered. A compositionally biased stretch (basic residues) spans 351–362 (RRKRENKKRRKD). Serine 377 carries the post-translational modification Phosphoserine. Residues 379–389 (NEGSSAYSDTE) are compositionally biased toward polar residues.

This Schizosaccharomyces pombe (strain 972 / ATCC 24843) (Fission yeast) protein is Brix domain-containing protein C1B9.03c.